The following is a 240-amino-acid chain: Ribosomal RNA small subunit methyltransferase G (240 aa).

S-adenosyl-L-methionine-binding positions include G79, F84, 130–131, and R149; that span reads AE.

Belongs to the methyltransferase superfamily. RNA methyltransferase RsmG family.

It localises to the cytoplasm. Specifically methylates the N7 position of a guanine in 16S rRNA. The polypeptide is Ribosomal RNA small subunit methyltransferase G (Lactobacillus helveticus (strain DPC 4571)).